A 491-amino-acid polypeptide reads, in one-letter code: Cobyric acid synthase (491 aa).

In terms of domain architecture, GATase cobBQ-type spans 250–437 (RLRVVVPVLP…LHGIFDHPAA (188 aa)). Cys-331 acts as the Nucleophile in catalysis. His-429 is a catalytic residue.

Belongs to the CobB/CobQ family. CobQ subfamily.

Its pathway is cofactor biosynthesis; adenosylcobalamin biosynthesis. Its function is as follows. Catalyzes amidations at positions B, D, E, and G on adenosylcobyrinic A,C-diamide. NH(2) groups are provided by glutamine, and one molecule of ATP is hydrogenolyzed for each amidation. The sequence is that of Cobyric acid synthase from Xanthomonas campestris pv. campestris (strain B100).